The primary structure comprises 290 residues: 33 kDa chaperonin (290 aa).

2 disulfides stabilise this stretch: Cys235–Cys237 and Cys268–Cys271.

This sequence belongs to the HSP33 family. Under oxidizing conditions two disulfide bonds are formed involving the reactive cysteines. Under reducing conditions zinc is bound to the reactive cysteines and the protein is inactive.

Its subcellular location is the cytoplasm. Functionally, redox regulated molecular chaperone. Protects both thermally unfolding and oxidatively damaged proteins from irreversible aggregation. Plays an important role in the bacterial defense system toward oxidative stress. The sequence is that of 33 kDa chaperonin from Streptococcus pyogenes serotype M18 (strain MGAS8232).